A 555-amino-acid polypeptide reads, in one-letter code: Oxygen-dependent choline dehydrogenase (555 aa).

Asp4–Glu33 contacts FAD. His473 acts as the Proton acceptor in catalysis.

Belongs to the GMC oxidoreductase family. FAD is required as a cofactor.

The catalysed reaction is choline + A = betaine aldehyde + AH2. It carries out the reaction betaine aldehyde + NAD(+) + H2O = glycine betaine + NADH + 2 H(+). Its pathway is amine and polyamine biosynthesis; betaine biosynthesis via choline pathway; betaine aldehyde from choline (cytochrome c reductase route): step 1/1. Its function is as follows. Involved in the biosynthesis of the osmoprotectant glycine betaine. Catalyzes the oxidation of choline to betaine aldehyde and betaine aldehyde to glycine betaine at the same rate. The protein is Oxygen-dependent choline dehydrogenase of Proteus mirabilis (strain HI4320).